A 1321-amino-acid polypeptide reads, in one-letter code: C-Jun-amino-terminal kinase-interacting protein 4 (1321 aa).

Met-1 is modified (N-acetylmethionine). In terms of domain architecture, RH1 spans 7 to 95 (VVYQEEPGGS…ITQYEREKAL (89 aa)). The stretch at 66–166 (AQDQEHQVEL…NALHQRHTEM (101 aa)) forms a coiled coil. Residues Ser-109, Ser-183, Ser-185, Ser-194, and Ser-203 each carry the phosphoserine modification. The tract at residues 203–308 (SLGIFPLPAG…EGFVKGTDTS (106 aa)) is disordered. Residue Thr-217 is modified to Phosphothreonine. Positions 236 to 248 (ELSQPRSHTSLKV) are enriched in polar residues. Phosphoserine is present on residues Ser-238, Ser-251, Ser-265, Ser-268, and Ser-272. Residues 266-285 (DISQGGSKATTPASTANSDV) are compositionally biased toward polar residues. Position 292 is a phosphothreonine (Thr-292). Residues Ser-311, Ser-329, Ser-332, and Ser-347 each carry the phosphoserine modification. Over residues 322-332 (AQETRNVSTES) the composition is skewed to polar residues. The interval 322-341 (AQETRNVSTESGENEEKSEV) is disordered. Residues Thr-348, Thr-365, and Thr-418 each carry the phosphothreonine modification. Residues 408–534 (REVENLILEN…LQEAVRWTEM (127 aa)) adopt a coiled-coil conformation. Basic and acidic residues predominate over residues 473-489 (LRKARAEAEDARQKAKD). 2 disordered regions span residues 473–500 (LRKA…TAQR) and 563–600 (SSNA…SQLP). Residues 500–604 (RKRFTRVEMA…TLSQLPGDKS (105 aa)) form the RH2 domain. Thr-586 is subject to Phosphothreonine. Residue Ser-588 is modified to Phosphoserine. Phosphothreonine is present on Thr-595. Ser-705, Ser-728, Ser-730, Ser-732, and Ser-733 each carry phosphoserine. A coiled-coil region spans residues 724 to 758 (SKQRSASQSSLDKLDQELKEQQKEFKNQEELSSQV). Residues 853-883 (TGAATSPSTNGASPVIEKPPEMETENSEVDE) are disordered. A compositionally biased stretch (polar residues) spans 855 to 864 (AATSPSTNGA). A compositionally biased stretch (acidic residues) spans 874-883 (METENSEVDE). Ser-1188 carries the post-translational modification Phosphoserine. Residues 1239–1267 (PQSSSGGADLTADKAGSSAQEPSSQTPLK) form a disordered region. Residues 1255–1266 (SSAQEPSSQTPL) are compositionally biased toward polar residues. Thr-1264 is modified (phosphothreonine).

This sequence belongs to the JIP scaffold family. In terms of assembly, homodimer. The homodimer interacts with ARF6, forming a heterotetramer. Homooligomer. Interacts with MAX, MAPK8, MAPK14, MAP3K3, MYC, and MAP2K4. Interacts with KNS2. Interaction with KNS2 is important in the formation of ternary complex with MAPK8. Interacts with PIP4P1. Interacts with PIKFYVE. In terms of processing, phosphorylated by MAPK8 and MAPK14. As to expression, highly expressed in brain, kidney, liver, heart.

The protein resides in the cytoplasm. Its subcellular location is the perinuclear region. It is found in the lysosome membrane. Its function is as follows. The JNK-interacting protein (JIP) group of scaffold proteins selectively mediates JNK signaling by aggregating specific components of the MAPK cascade to form a functional JNK signaling module. Regulates lysosomal positioning by acting as an adapter protein which links PIP4P1-positive lysosomes to the dynein-dynactin complex. Assists PIKFYVE selective functionality in microtubule-based endosome-to-TGN trafficking. The sequence is that of C-Jun-amino-terminal kinase-interacting protein 4 from Mus musculus (Mouse).